A 423-amino-acid polypeptide reads, in one-letter code: F-box/LRR-repeat protein 2 (423 aa).

In terms of domain architecture, F-box spans 9 to 55 (GLINKKLPKELLLRIFSFLDIVTLCRCAQISKAWNILALDGSNWQRI). LRR repeat units lie at residues 61-87 (QTDV…SLRG), 88-113 (CIGV…NLNG), 114-139 (CTKI…DLTS), 140-165 (CVSI…NLSW), 166-191 (CDQI…LLRG), 192-217 (CTQL…NLQS), 218-243 (CSRV…CLSG), 244-269 (CGSL…EAAR), 270-295 (CSHL…DLEE), 296-321 (CILI…SLSH), 322-350 (CELI…ELDN), 351-375 (CLLI…ELYD), and 376-401 (CQQV…AYFA). The interval 80 to 90 (LRKLSLRGCIG) is interaction with Calmodulin. K201 is covalently cross-linked (Glycyl lysine isopeptide (Lys-Gly) (interchain with G-Cter in ubiquitin)). Residue T404 is modified to Phosphothreonine. A lipid anchor (S-geranylgeranyl cysteine) is attached at C420. A CAAX motif motif is present at residues 420-423 (CVIL).

In terms of assembly, part of the SCF (SKP1-CUL1-F-box) E3 ubiquitin-protein ligase complex SCF(FBXL2) composed of CUL1, SKP1, RBX1 and FBXL2. Interacts with calmodulin; may antagonize substrate ubiquitination by SCF(FBXL2). May interact with PIK3R1. Interacts with PTPN13. Post-translationally, phosphorylated by GSK-beta (GSK3B), promoting recognition by FBXO3, leading to its ubiquitination by the SCF(FBXO3) complex. Ubiquitinated at Lys-201 by the SCF(FBXO3) complex in response to lipopolysaccharide (LPS), leading to its degradation by the proteasome.

The protein resides in the membrane. Its pathway is protein modification; protein ubiquitination. Calcium-activated substrate recognition component of the SCF (SKP1-cullin-F-box protein) E3 ubiquitin-protein ligase complex, SCF(FBXL2), which mediates the ubiquitination and subsequent proteasomal degradation of target proteins. Unlike many F-box proteins, FBXL2 does not seem to target phosphodegron within its substrates but rather calmodulin-binding motifs and is thereby antagonized by calmodulin. This is the case for the cyclins CCND2 and CCND3 which polyubiquitination and subsequent degradation are inhibited by calmodulin. Through CCND2 and CCND3 degradation induces cell-cycle arrest in G(0). SCF(FBXL2) also mediates PIK3R2 ubiquitination and proteasomal degradation thereby regulating phosphatidylinositol 3-kinase signaling and autophagy. PCYT1A monoubiquitination by SCF(FBXL2) and subsequent degradation regulates synthesis of phosphatidylcholine, which is utilized for formation of membranes and of pulmonary surfactant. The SCF(FBXL2) complex acts as a regulator of inflammation by mediating ubiquitination and degradation of TRAF proteins (TRAF1, TRAF2, TRAF3, TRAF4, TRAF5 and TRAF6). The SCF(FBXL2) complex acts as a negative regulator of the NLRP3 inflammasome by mediating ubiquitination and degradation of NLRP3. This Bos taurus (Bovine) protein is F-box/LRR-repeat protein 2.